The chain runs to 63 residues: Large ribosomal subunit protein bL28 (63 aa).

Belongs to the bacterial ribosomal protein bL28 family.

This is Large ribosomal subunit protein bL28 from Geotalea daltonii (strain DSM 22248 / JCM 15807 / FRC-32) (Geobacter daltonii).